A 146-amino-acid chain; its full sequence is Hemoglobin subunit beta-1/2 (146 aa).

Residues 2–146 enclose the Globin domain; that stretch reads EWTDKERSII…VVSALGKQYH (145 aa). Positions 63 and 92 each coordinate heme b.

This sequence belongs to the globin family. Hb1 is a heterotetramer of two alpha-1 chains and two beta chains. Hb2 is a heterotetramer of two alpha-2 chains and two beta chains. In terms of tissue distribution, red blood cells.

Its function is as follows. Involved in oxygen transport from gills to the various peripheral tissues. This Trematomus newnesi (Dusky notothen) protein is Hemoglobin subunit beta-1/2.